Here is a 764-residue protein sequence, read N- to C-terminus: Complement factor B (764 aa).

The signal sequence occupies residues Met1–Thr25. Sushi domains are found at residues Gly35 to Ala100, Ile101 to Asn160, and Gly163 to Asp220. Disulfide bonds link Cys37–Cys76, Cys62–Cys98, Cys103–Cys145, Cys131–Cys158, Cys165–Cys205, and Cys191–Cys218. Residues Asn122 and Asn142 are each glycosylated (N-linked (GlcNAc...) asparagine). The VWFA domain maps to Asn270–Ile469. 2 residues coordinate Mg(2+): Ser278 and Ser280. N-linked (GlcNAc...) asparagine glycosylation is present at Asn285. Residue Thr353 coordinates Mg(2+). Asn378 carries an N-linked (GlcNAc...) asparagine glycan. The Peptidase S1 domain occupies Leu477–Gln757. 5 disulfides stabilise this stretch: Cys478–Cys596, Cys511–Cys527, Cys599–Cys615, Cys656–Cys682, and Cys695–Cys725. Active-site charge relay system residues include His526 and Asp576. Ser699 (charge relay system) is an active-site residue.

It belongs to the peptidase S1 family. Monomer. Interacts with complement C3b; this interaction is dependent on the presence of Mg(2+). In terms of assembly, catalytic component of the C3 convertase of the alternative complement pathway, also named C3bBb, composed of complement factor B Bb and complement C3b. Catalytic component of the C5 convertase of the alternative complement pathway, also named C3bBb3b, composed of complement factor B Bb and additional molecules of complement C3b. Interacts to CFP; this interaction contributes to the stabilization of the active C3-convertase enzyme complex. Mg(2+) serves as cofactor. The cofactor is Mn(2+). Cleaved by CFD following activation of the alternative complement system, generating Ba and Bb chains. Cleavage and activation takes place when CFB is already associated with complement C3b.

Its subcellular location is the secreted. It localises to the cell surface. The catalysed reaction is Cleavage of Arg-|-Ser bond in complement component C3 alpha-chain to yield C3a and C3b, and Arg-|-Xaa bond in complement component C5 alpha-chain to yield C5a and C5b.. Functionally, precursor of the catalytic component of the C3 and C5 convertase complexes of the alternative pathway of the complement system, a cascade of proteins that leads to phagocytosis and breakdown of pathogens and signaling that strengthens the adaptive immune system. The alternative complement pathway acts as an amplification loop that enhances other complement pathways (classical, lectin and GZMK) by promoting formation of additional C3 and C5 convertases. CFB is cleaved and activated by CFD to generate Ba and Bb chains; Bb chain constituting the catalytic component of the C3 and C5 convertases. Serine protease component of the complement C3 and C5 convertase complexes of the alternative complement pathway. Following cleavage and activation by factor D (CFD), forms the C3 convertase together with complement C3b. As part of the C3 convertase, cleaves and activates C3 into C3a anaphylatoxin and C3b opsonin, the next components of the complement pathways. When an additional complement C3b molecule binds to the C3 convertase, forms the C5 convertase, which cleaves and activates C5 into C5a anaphylatoxin and C5b component of the membrane attack complex. Its function is as follows. Involved in proliferation and differentiation of preactivated B-lymphocytes, rapid spreading of peripheral blood monocytes, stimulation of lymphocyte blastogenesis and lysis of erythrocytes. The protein is Complement factor B (CFB) of Pongo pygmaeus (Bornean orangutan).